The sequence spans 403 residues: Protein WVD2-like 6 (403 aa).

2 disordered regions span residues 1–179 (MDSE…ALPN) and 254–403 (LKKI…AVEP). Residues 25–56 (GDSSNGNGGTSENLECCSTQHPMEASEGTQNE) are compositionally biased toward polar residues. Positions 103–118 (SVAPNVKPVKSPKSKS) are enriched in low complexity. S113 carries the post-translational modification Phosphoserine. Composition is skewed to basic and acidic residues over residues 120 to 132 (NGRE…HGNH), 139 to 153 (GTRD…RKQV), and 162 to 171 (QYPKEDDGKP). Residues 263-273 (KSPKLGRKKTN) show a composition bias toward basic residues. Positions 336–348 (KVAPAKAVTASTK) are enriched in low complexity. Over residues 385 to 394 (VNEDRNESHM) the composition is skewed to basic and acidic residues.

It belongs to the TPX2 family. Expressed in seedlings.

The protein localises to the cytoplasm. Its subcellular location is the cytoskeleton. Microtubule-associated protein (MAP) that regulates the orientation of interphase cortical microtubules. The polypeptide is Protein WVD2-like 6 (Arabidopsis thaliana (Mouse-ear cress)).